Consider the following 37-residue polypeptide: Large ribosomal subunit protein bL36c (37 aa).

This sequence belongs to the bacterial ribosomal protein bL36 family.

Its subcellular location is the plastid. It localises to the organellar chromatophore. This chain is Large ribosomal subunit protein bL36c, found in Paulinella chromatophora.